The chain runs to 448 residues: Phosphohexose mutases (448 aa).

The Phosphoserine intermediate role is filled by S97. Mg(2+) is bound by residues S97, D237, D239, and D241.

Belongs to the phosphohexose mutase family. It depends on Mg(2+) as a cofactor.

It carries out the reaction alpha-D-glucose 1-phosphate = alpha-D-glucose 6-phosphate. The catalysed reaction is alpha-D-mannose 1-phosphate = D-mannose 6-phosphate. It functions in the pathway nucleotide-sugar biosynthesis; GDP-alpha-D-mannose biosynthesis; alpha-D-mannose 1-phosphate from D-fructose 6-phosphate: step 2/2. Its function is as follows. Involved in xanthan production. The protein is Phosphohexose mutases (xanA) of Xanthomonas campestris pv. campestris (strain ATCC 33913 / DSM 3586 / NCPPB 528 / LMG 568 / P 25).